A 216-amino-acid polypeptide reads, in one-letter code: Ras-related protein Rab-11A (216 aa).

An N-acetylglycine modification is found at glycine 2. Positions 20, 21, 22, 23, 24, 25, 26, 37, 38, 40, 42, and 43 each coordinate GTP. Serine 25 lines the Mg(2+) pocket. The short motif at 36–47 (FNLESKSTIGVE) is the Switch 1 element. Mg(2+)-binding residues include threonine 43 and aspartate 66. The short motif at 67 to 86 (TAGQERYRAITSAYYRGAVG) is the Switch 2 element. Positions 69, 124, 125, 127, 155, and 156 each coordinate GTP. Residues 183–211 (DRRENDMSPSNNVVPIHVPPTTENKPKVQ) are disordered. Residues cysteine 212 and cysteine 213 are each lipidated (S-geranylgeranyl cysteine). A Cysteine methyl ester modification is found at cysteine 213. Residues 214–216 (QNI) constitute a propeptide, removed in mature form.

This sequence belongs to the small GTPase superfamily. Rab family. Interacts (GTP-bound form) with RAB11FIPs (via their C-termini) including RAB11FIP1, RAB11FIP2, RAB11FIP3, RAB11FIP4 and RAB11FIP5 effectors. Forms a complex with RAB11FIP3 and dynein intermediate chain DYNC1LI1; the interaction between RAB11A1 and RAB11FIP3 is direct; the complex regulates endocytic trafficking. Interacts with EVI5; EVI5 and RAB11FIP3 may be mutually exclusive and compete for binding RAB11A. Interacts with SGSM1, SGSM2, SGSM3 and VIPAS39. Interacts with EXOC6 in a GTP-dependent manner. Interacts with RAB11FIP5. Interacts with STXBP6. Interacts (GDP-bound form) with ZFYVE27. Interacts with BIRC6/bruce. May interact with TBC1D14. Interacts with UNC119; in a cell cycle-dependent manner. GDP-bound and nucleotide-free forms interact with SH3BP5. Interacts (GDP-bound form) with KIF5A in a ZFYVE27-dependent manner. Interacts (GDP-bound form) with RELCH. Found in a complex composed of RELCH, OSBP1 and RAB11A. Interacts with TBC1D12. Interacts with DEF6. Interacts with ATP9A. Forms a heterotetramer with RAB11FIP3; the GTP-bound form is preferred for binding. Forms a complex with Rabin8/RAB3IP and RAB11FIP3, probably a heterohexamer with two of each protein subunit, where Rabin8/RAB3IP and RAB11FIP3 simultaneously bind to RAB11A; the complex promotes preciliary trafficking and cilia growth. Forms a complex containing RAB11A, ASAP1, Rabin8/RAB3IP, RAP11FIP3 and ARF4; the complex promotes preciliary trafficking; the complex binds to RHO in photoreceptor cells and promotes RHO ciliary transport. Interacts (GTP-bound form) with WDR44; the interaction prevents RAB11A-RAB3IP-RAB11FIP3 complex formation. Mg(2+) is required as a cofactor. In terms of tissue distribution, detected in various tissues, such as brain, testis, spleen, and heart.

It localises to the cell membrane. The protein resides in the endosome membrane. It is found in the recycling endosome membrane. Its subcellular location is the cleavage furrow. The protein localises to the cytoplasmic vesicle. It localises to the phagosome. The protein resides in the cytoplasmic vesicle membrane. It is found in the golgi apparatus. Its subcellular location is the trans-Golgi network. The enzyme catalyses GTP + H2O = GDP + phosphate + H(+). Its activity is regulated as follows. Regulated by guanine nucleotide exchange factors (GEFs) which promote the exchange of bound GDP for free GTP. Regulated by GTPase activating proteins (GAPs) which increase the GTP hydrolysis activity. Inhibited by GDP dissociation inhibitors (GDIs) which prevent Rab-GDP dissociation. In terms of biological role, the small GTPases Rab are key regulators of intracellular membrane trafficking, from the formation of transport vesicles to their fusion with membranes. Rabs cycle between an inactive GDP-bound form and an active GTP-bound form that is able to recruit to membranes different set of downstream effectors directly responsible for vesicle formation, movement, tethering and fusion. The small Rab GTPase RAB11A regulates endocytic recycling. Forms a functional Rab11/RAB11FIP3/dynein complex that regulates the movement of peripheral sorting endosomes (SE) along microtubule tracks toward the microtubule organizing center/centrosome, generating the endosomal recycling compartment (ERC). Acts as a major regulator of membrane delivery during cytokinesis. Together with MYO5B and RAB8A participates in epithelial cell polarization. Together with Rabin8/RAB3IP, RAB8A, the exocyst complex, PARD3, PRKCI, ANXA2, CDC42 and DNMBP promotes transcytosis of PODXL to the apical membrane initiation sites (AMIS), apical surface formation and lumenogenesis. Together with MYO5B participates in CFTR trafficking to the plasma membrane and TF (Transferrin) recycling in nonpolarized cells. Required in a complex with MYO5B and RAB11FIP2 for the transport of NPC1L1 to the plasma membrane. Participates in the sorting and basolateral transport of CDH1 from the Golgi apparatus to the plasma membrane. Regulates the recycling of FCGRT (receptor of Fc region of monomeric IgG) to basolateral membranes. May also play a role in melanosome transport and release from melanocytes. Promotes Rabin8/RAB3IP preciliary vesicular trafficking to mother centriole by forming a ciliary targeting complex containing Rab11, ASAP1, Rabin8/RAB3IP, RAB11FIP3 and ARF4, thereby regulating ciliogenesis initiation. On the contrary, upon LPAR1 receptor signaling pathway activation, interaction with phosphorylated WDR44 prevents Rab11-RAB3IP-RAB11FIP3 complex formation and cilia growth. Participates in the export of a subset of neosynthesized proteins through a Rab8-Rab10-Rab11-endososomal dependent export route via interaction with WDR44. The protein is Ras-related protein Rab-11A of Rattus norvegicus (Rat).